The primary structure comprises 60 residues: Cytochrome c oxidase subunit 9, mitochondrial (60 aa).

The Mitochondrial matrix portion of the chain corresponds to 1-18; sequence MSAIAPITGSLKKRIMKD. A helical transmembrane segment spans residues 19–37; the sequence is IAVGMGLGTVLGSYWWWGF. Residues 38–57 are Mitochondrial intermembrane-facing; it reads HKPKIAARENYYTQLAEQKA. Positions 58 to 60 are cleaved as a propeptide — removed in mature form; the sequence is AEE.

The protein belongs to the fungal cytochrome c oxidase subunit 7a family. In terms of assembly, component of the cytochrome c oxidase (complex IV, CIV), a multisubunit enzyme composed of a catalytic core of 3 subunits and several supernumerary subunits. The complex exists as a monomer or a dimer and forms supercomplexes (SCs) in the inner mitochondrial membrane with ubiquinol-cytochrome c oxidoreductase (cytochrome b-c1 complex, complex III, CIII).

The protein resides in the mitochondrion inner membrane. It functions in the pathway energy metabolism; oxidative phosphorylation. Its function is as follows. Component of the cytochrome c oxidase, the last enzyme in the mitochondrial electron transport chain which drives oxidative phosphorylation. The respiratory chain contains 3 multisubunit complexes succinate dehydrogenase (complex II, CII), ubiquinol-cytochrome c oxidoreductase (cytochrome b-c1 complex, complex III, CIII) and cytochrome c oxidase (complex IV, CIV), that cooperate to transfer electrons derived from NADH and succinate to molecular oxygen, creating an electrochemical gradient over the inner membrane that drives transmembrane transport and the ATP synthase. Cytochrome c oxidase is the component of the respiratory chain that catalyzes the reduction of oxygen to water. Electrons originating from reduced cytochrome c in the intermembrane space (IMS) are transferred via the dinuclear copper A center (CU(A)) of subunit 2 and heme A of subunit 1 to the active site in subunit 1, a binuclear center (BNC) formed by heme A3 and copper B (CU(B)). The BNC reduces molecular oxygen to 2 water molecules using 4 electrons from cytochrome c in the IMS and 4 protons from the mitochondrial matrix. In Eremothecium gossypii (strain ATCC 10895 / CBS 109.51 / FGSC 9923 / NRRL Y-1056) (Yeast), this protein is Cytochrome c oxidase subunit 9, mitochondrial (COX9).